A 158-amino-acid chain; its full sequence is MAKSNYITRQGWLALDQELKFLWKEERPKVTQAVSDAAALGDRSENAEYIYGKRRLREIDRRVRFLTKRLEVLQIVDYNPKQEGKVFFGAWVELENEEGETKQYRIVGCDEFAPAKNWISIDSPVARALIGKTLDDEVRVETPSGFITLYVNKIWYEK.

Residues 53–75 (KRRLREIDRRVRFLTKRLEVLQI) adopt a coiled-coil conformation.

Belongs to the GreA/GreB family. GreB subfamily.

In terms of biological role, necessary for efficient RNA polymerase transcription elongation past template-encoded arresting sites. The arresting sites in DNA have the property of trapping a certain fraction of elongating RNA polymerases that pass through, resulting in locked ternary complexes. Cleavage of the nascent transcript by cleavage factors such as GreA or GreB allows the resumption of elongation from the new 3'terminus. GreB releases sequences of up to 9 nucleotides in length. The polypeptide is Transcription elongation factor GreB (Haemophilus influenzae (strain ATCC 51907 / DSM 11121 / KW20 / Rd)).